The sequence spans 279 residues: Oxygen-dependent coproporphyrinogen-III oxidase (279 aa).

A substrate-binding site is contributed by Ser102. Residues His106 and His116 each coordinate a divalent metal cation. The active-site Proton donor is His116. Residue 118–120 coordinates substrate; the sequence is NTR. A divalent metal cation-binding residues include His149 and His179. The segment at 244–279 is important for dimerization; the sequence is YVEFNLLYDRGTKFGLMTDGNVEAILMSLPPEVKWA.

This sequence belongs to the aerobic coproporphyrinogen-III oxidase family. In terms of assembly, homodimer. Requires a divalent metal cation as cofactor.

It localises to the cytoplasm. The catalysed reaction is coproporphyrinogen III + O2 + 2 H(+) = protoporphyrinogen IX + 2 CO2 + 2 H2O. The protein operates within porphyrin-containing compound metabolism; protoporphyrin-IX biosynthesis; protoporphyrinogen-IX from coproporphyrinogen-III (O2 route): step 1/1. Involved in the heme biosynthesis. Catalyzes the aerobic oxidative decarboxylation of propionate groups of rings A and B of coproporphyrinogen-III to yield the vinyl groups in protoporphyrinogen-IX. The protein is Oxygen-dependent coproporphyrinogen-III oxidase of Rickettsia bellii (strain RML369-C).